The primary structure comprises 1003 residues: X-linked retinitis pigmentosa GTPase regulator (1003 aa).

RCC1 repeat units lie at residues 54–105, 106–158, 159–208, 209–261, 262–313, and 314–367; these read NKLY…STEG, GKVY…LTED, GELF…VTTE, GQLY…LTEK, AVYT…ITDM, and GLMY…FATP. Ser-418 bears the Phosphoserine mark. The disordered stretch occupies residues 460–495; that stretch reads TPEKEGLTQPEPDYFRDNMAKGKETDNSSATDSESL. Positions 472-485 are enriched in basic and acidic residues; that stretch reads DYFRDNMAKGKETD. Residues 486 to 495 are compositionally biased toward polar residues; sequence NSSATDSESL. Ser-520 is modified (phosphoserine). Disordered stretches follow at residues 625–657, 691–760, 794–932, and 968–1003; these read FKAI…LAEM, ESKD…TDQN, LSEI…DVKK, and AFKG…CTIL. Positions 693–715 are enriched in basic and acidic residues; sequence KDFVKDSRRNKQDVIFDSERESI. 2 stretches are compositionally biased toward acidic residues: residues 716 to 726 and 797 to 821; these read EEPDSYLEGES and IPEE…EANE. The span at 827 to 848 shows a compositional bias: basic and acidic residues; sequence AGKEEKEIEILSDDLTDRAEDH. The segment covering 849–867 has biased composition (acidic residues); the sequence is EFSEDEEPEDMAEELDEDL. Basic and acidic residues predominate over residues 882-896; it reads SLKKDETTKQEKRAI. Over residues 913 to 924 the composition is skewed to low complexity; that stretch reads SSSSEVLNDSES. Residues 978–989 are compositionally biased toward polar residues; sequence QNHMGQNHQDTS. Cys-1000 carries the post-translational modification Cysteine methyl ester. A lipid anchor (S-geranylgeranyl cysteine) is attached at Cys-1000. The propeptide at 1001–1003 is removed in mature form; the sequence is TIL.

In terms of assembly, interacts with PDE6D. Interacts with RPGRIP1. Interacts with RPGRIP1L. PDE6D, RPGRIP1 and RPGRIP1L may compete for the same binding sites. Interacts with NPM1. Interacts with SMC1A and SMC3. Interacts with CEP290. Interacts with WHRN. Interacts with SPATA7. Interacts with RAB37 and RAB8A (in GDP-bound forms); functions as GEF for RAB37 and RAB8A. Prenylated. As to expression, isoform 1 is expressed exclusively in testis. Isoforms 2, 3 and 4 are widely expressed.

The protein resides in the golgi apparatus. It localises to the cell projection. It is found in the cilium. The protein localises to the cytoplasm. Its subcellular location is the cytoskeleton. The protein resides in the cilium basal body. It localises to the microtubule organizing center. It is found in the centrosome. The protein localises to the cilium axoneme. Its subcellular location is the flagellum axoneme. Functionally, acts as a guanine-nucleotide releasing factor (GEF) for RAB8A and RAB37 by promoting the conversion of inactive RAB-GDP to the active form RAB-GTP. GEF activity towards RAB8A may facilitate ciliary trafficking by modulating ciliary intracellular localization of RAB8A. GEF activity towards RAB37 maintains autophagic homeostasis and retinal function. Involved in photoreceptor integrity. May control cilia formation by regulating actin stress filaments and cell contractility. May be involved in microtubule organization and regulation of transport in primary cilia. May play a critical role in spermatogenesis and in intraflagellar transport processes. The protein is X-linked retinitis pigmentosa GTPase regulator (RPGR) of Canis lupus familiaris (Dog).